Reading from the N-terminus, the 480-residue chain is Bifunctional protein GlmU (480 aa).

A pyrophosphorylase region spans residues 1–247 (MATPIDVVIM…AAQVAGVNSP (247 aa)). UDP-N-acetyl-alpha-D-glucosamine contacts are provided by residues K24, Q86, 91-92 (GT), 113-115 (SGD), G150, E172, and N245. A Mg(2+)-binding site is contributed by D115. N245 contributes to the Mg(2+) binding site. The linker stretch occupies residues 248-268 (VQLAELERVYQLRQATALMEQ). The segment at 269–480 (GVRLADPARF…WKRPVKVSKG (212 aa)) is N-acetyltransferase. R355 and K373 together coordinate UDP-N-acetyl-alpha-D-glucosamine. The active-site Proton acceptor is the H385. Residues Y388 and N399 each contribute to the UDP-N-acetyl-alpha-D-glucosamine site. Residues A402, 408-409 (NY), S427, G445, and R462 contribute to the acetyl-CoA site.

This sequence in the N-terminal section; belongs to the N-acetylglucosamine-1-phosphate uridyltransferase family. In the C-terminal section; belongs to the transferase hexapeptide repeat family. As to quaternary structure, homotrimer. It depends on Mg(2+) as a cofactor.

The protein resides in the cytoplasm. The catalysed reaction is alpha-D-glucosamine 1-phosphate + acetyl-CoA = N-acetyl-alpha-D-glucosamine 1-phosphate + CoA + H(+). The enzyme catalyses N-acetyl-alpha-D-glucosamine 1-phosphate + UTP + H(+) = UDP-N-acetyl-alpha-D-glucosamine + diphosphate. The protein operates within nucleotide-sugar biosynthesis; UDP-N-acetyl-alpha-D-glucosamine biosynthesis; N-acetyl-alpha-D-glucosamine 1-phosphate from alpha-D-glucosamine 6-phosphate (route II): step 2/2. It participates in nucleotide-sugar biosynthesis; UDP-N-acetyl-alpha-D-glucosamine biosynthesis; UDP-N-acetyl-alpha-D-glucosamine from N-acetyl-alpha-D-glucosamine 1-phosphate: step 1/1. Its pathway is bacterial outer membrane biogenesis; LPS lipid A biosynthesis. In terms of biological role, catalyzes the last two sequential reactions in the de novo biosynthetic pathway for UDP-N-acetylglucosamine (UDP-GlcNAc). The C-terminal domain catalyzes the transfer of acetyl group from acetyl coenzyme A to glucosamine-1-phosphate (GlcN-1-P) to produce N-acetylglucosamine-1-phosphate (GlcNAc-1-P), which is converted into UDP-GlcNAc by the transfer of uridine 5-monophosphate (from uridine 5-triphosphate), a reaction catalyzed by the N-terminal domain. This is Bifunctional protein GlmU from Polaromonas sp. (strain JS666 / ATCC BAA-500).